Reading from the N-terminus, the 603-residue chain is Penicillin-binding protein activator LpoA (603 aa).

The N-terminal stretch at 1 to 26 is a signal peptide; that stretch reads MANMTPRKNSVTRLIAPVALALTLAA. Cysteine 27 is lipidated: N-palmitoyl cysteine. Cysteine 27 carries the S-diacylglycerol cysteine lipid modification.

This sequence belongs to the LpoA family. In terms of assembly, interacts with PBP1a.

The protein localises to the cell outer membrane. Functionally, regulator of peptidoglycan synthesis that is essential for the function of penicillin-binding protein 1A (PBP1a). The polypeptide is Penicillin-binding protein activator LpoA (Aliivibrio fischeri (strain ATCC 700601 / ES114) (Vibrio fischeri)).